The sequence spans 561 residues: Chaperonin GroEL 1 (561 aa).

ATP-binding positions include 29–32 (TMGP), 86–90 (DGTTT), G413, and D495.

It belongs to the chaperonin (HSP60) family. In terms of assembly, forms a cylinder of 14 subunits composed of two heptameric rings stacked back-to-back. Interacts with the co-chaperonin GroES.

The protein localises to the cytoplasm. It carries out the reaction ATP + H2O + a folded polypeptide = ADP + phosphate + an unfolded polypeptide.. In terms of biological role, together with its co-chaperonin GroES, plays an essential role in assisting protein folding. The GroEL-GroES system forms a nano-cage that allows encapsulation of the non-native substrate proteins and provides a physical environment optimized to promote and accelerate protein folding. The polypeptide is Chaperonin GroEL 1 (Trichodesmium erythraeum (strain IMS101)).